We begin with the raw amino-acid sequence, 78 residues long: MSRVCQVTGKRPVTGNNRSHARNATKRRFLPNLQTHRFWVESEKRFVKLRLTAKGMRIIDKKGIDAVLVDIRARGENV.

The interval 1–20 (MSRVCQVTGKRPVTGNNRSH) is disordered.

The protein belongs to the bacterial ribosomal protein bL28 family.

The chain is Large ribosomal subunit protein bL28 from Vibrio atlanticus (strain LGP32) (Vibrio splendidus (strain Mel32)).